The chain runs to 310 residues: Cytochrome f (310 aa).

Positions 1-26 are cleaved as a signal peptide; the sequence is MNIKLTLLVLISIINLMIIQPIQTLA. The heme site is built by F27, C47, C50, and H51. A helical transmembrane segment spans residues 276 to 296; the sequence is IKGMIVFFFTVTIAQIFFVLK.

This sequence belongs to the cytochrome f family. As to quaternary structure, the 4 large subunits of the cytochrome b6-f complex are cytochrome b6, subunit IV (17 kDa polypeptide, petD), cytochrome f and the Rieske protein, while the 4 small subunits are PetG, PetL, PetM and PetN. The complex functions as a dimer. It depends on heme as a cofactor.

The protein resides in the plastid. It is found in the chloroplast thylakoid membrane. Functionally, component of the cytochrome b6-f complex, which mediates electron transfer between photosystem II (PSII) and photosystem I (PSI), cyclic electron flow around PSI, and state transitions. The protein is Cytochrome f of Gracilaria tenuistipitata var. liui (Red alga).